Consider the following 275-residue polypeptide: Large ribosomal subunit protein uL2 (275 aa).

The disordered stretch occupies residues 223-275; that stretch reads VAMNPVDHPHGGGEGRTSGGRHPVTPWGVPTKGYKTRSNKRTDKYIVRRRNKK.

This sequence belongs to the universal ribosomal protein uL2 family. Part of the 50S ribosomal subunit. Forms a bridge to the 30S subunit in the 70S ribosome.

In terms of biological role, one of the primary rRNA binding proteins. Required for association of the 30S and 50S subunits to form the 70S ribosome, for tRNA binding and peptide bond formation. It has been suggested to have peptidyltransferase activity; this is somewhat controversial. Makes several contacts with the 16S rRNA in the 70S ribosome. The polypeptide is Large ribosomal subunit protein uL2 (Shewanella loihica (strain ATCC BAA-1088 / PV-4)).